A 450-amino-acid polypeptide reads, in one-letter code: Bifunctional apoptosis regulator (450 aa).

The segment at 1–20 (MEEPQKSYVNTMDLERDEPL) is disordered. The Cytoplasmic segment spans residues 1–140 (MEEPQKSYVN…PNTGRANQQM (140 aa)). The RING-type zinc finger occupies 34–74 (CHCCYDILVNPTTLNCGHSFCRHCLALWWASSKKTECPECR). A helical membrane pass occupies residues 141 to 161 (GGGFFSGVLTALTGVAVVLLV). The Lumenal segment spans residues 162–331 (YHWSSRESEH…KEPTWKQWRE (170 aa)). The SAM domain occupies 182–249 (WTAEEVVLWL…LMELERVKAL (68 aa)). The N-linked (GlcNAc...) asparagine glycan is linked to Asn232. A helical transmembrane segment spans residues 332–352 (FLVKYSFLPYQLIAEFAWDWL). Residues 353 to 360 (EVHYWTSR) are Cytoplasmic-facing. A helical membrane pass occupies residues 361–381 (FLIINAMLLSVLELFSFWRIW). Residues 382-404 (SRSELKTVPQRMWSHFWKVSTQG) are Lumenal-facing. The chain crosses the membrane as a helical span at residues 405-425 (LFVAMFWPLIPQFVCNCLFYW). At 426 to 450 (ALYFNPIINIDLVVKELRRLETQVL) the chain is on the cytoplasmic side.

Interacts with CASP8, BCL2 and BCL2L1 through SAM domain and also with HIP1, IFT57, ESRRBL1 and BCAP31. Interacts with NGFR; this interaction inhibits NF-kappa-B and JNK-related signaling pathways. Post-translationally, mediates RING-dependent self-ubiquitination leading to proteasomal degradation. Expressed highly in brain, moderately in small intestine, weakly in testes and only faintly in liver and skeletal muscle. Not expressed in heart, kidney, lung and spleen.

It localises to the endoplasmic reticulum membrane. It catalyses the reaction S-ubiquitinyl-[E2 ubiquitin-conjugating enzyme]-L-cysteine + [acceptor protein]-L-lysine = [E2 ubiquitin-conjugating enzyme]-L-cysteine + N(6)-ubiquitinyl-[acceptor protein]-L-lysine.. Its function is as follows. Membrane-bound E3 ubiquitin ligase that plays a role in several processes including apoptosis regulation or reticulum endoplasmic stress. Has anti-apoptotic activity, both for apoptosis triggered via death-receptors and via mitochondrial factors. Contributes to the dynamic control of IRE1/ERN1 signaling during ER stress by inducing BAX inhibitor 1/TMBIM6 proteasomal degradation. Promotes the activation of TGF-beta signaling by mediating the 'Lys-63'-linked ubiquitination of TGFBR1 which is critical to activate the pathway. Together with NGFR, negatively regulates NF-kappa-B and JNK-related signaling pathways. Promotes the proteasome-mediated degradation of PNPLA3, a protein involveld in lipid metabolism. The sequence is that of Bifunctional apoptosis regulator (BFAR) from Homo sapiens (Human).